A 366-amino-acid chain; its full sequence is UDP-N-acetylglucosamine--N-acetylmuramyl-(pentapeptide) pyrophosphoryl-undecaprenol N-acetylglucosamine transferase (366 aa).

UDP-N-acetyl-alpha-D-glucosamine contacts are provided by residues 22 to 24, Asn-134, Arg-170, Ser-198, Ile-253, and Gln-298; that span reads TGG.

Belongs to the glycosyltransferase 28 family. MurG subfamily.

Its subcellular location is the cell inner membrane. The enzyme catalyses di-trans,octa-cis-undecaprenyl diphospho-N-acetyl-alpha-D-muramoyl-L-alanyl-D-glutamyl-meso-2,6-diaminopimeloyl-D-alanyl-D-alanine + UDP-N-acetyl-alpha-D-glucosamine = di-trans,octa-cis-undecaprenyl diphospho-[N-acetyl-alpha-D-glucosaminyl-(1-&gt;4)]-N-acetyl-alpha-D-muramoyl-L-alanyl-D-glutamyl-meso-2,6-diaminopimeloyl-D-alanyl-D-alanine + UDP + H(+). Its pathway is cell wall biogenesis; peptidoglycan biosynthesis. Cell wall formation. Catalyzes the transfer of a GlcNAc subunit on undecaprenyl-pyrophosphoryl-MurNAc-pentapeptide (lipid intermediate I) to form undecaprenyl-pyrophosphoryl-MurNAc-(pentapeptide)GlcNAc (lipid intermediate II). The protein is UDP-N-acetylglucosamine--N-acetylmuramyl-(pentapeptide) pyrophosphoryl-undecaprenol N-acetylglucosamine transferase of Xylella fastidiosa (strain M12).